The sequence spans 153 residues: Insulin-like growth factor 1 (153 aa).

Positions 49-77 are b; sequence GPETLCGAELVDALQFVCGDRGFYFNKPT. Disulfide bonds link Cys54/Cys96, Cys66/Cys109, and Cys95/Cys100. Positions 78-89 are c; sequence GYGSSSRRAPQT. The interval 90 to 110 is a; it reads GIVDECCFRSCDLRRLEMYCA. Residues 111–118 form a d region; that stretch reads PLKPAKSA. A propeptide spans 119-153 (e peptide); sequence RSVRAQRHTDMPKAQKEVHLKNASRGSAGNKNYRM. The segment at 120–153 is disordered; that stretch reads SVRAQRHTDMPKAQKEVHLKNASRGSAGNKNYRM. Residues 125-138 are compositionally biased toward basic and acidic residues; that stretch reads RHTDMPKAQKEVHL. Over residues 142-153 the composition is skewed to polar residues; it reads SRGSAGNKNYRM.

This sequence belongs to the insulin family. As to quaternary structure, forms a ternary complex with IGFR1 and ITGAV:ITGB3. Forms a ternary complex with IGFR1 and ITGA6:ITGB4. Forms a ternary complex with IGFBP3 and ALS.

It localises to the secreted. The insulin-like growth factors, isolated from plasma, are structurally and functionally related to insulin but have a much higher growth-promoting activity. May be a physiological regulator of [1-14C]-2-deoxy-D-glucose (2DG) transport and glycogen synthesis in osteoblasts. Stimulates glucose transport in bone-derived osteoblastic (PyMS) cells and is effective at much lower concentrations than insulin, not only regarding glycogen and DNA synthesis but also with regard to enhancing glucose uptake. May play a role in synapse maturation. Ca(2+)-dependent exocytosis of IGF1 is required for sensory perception of smell in the olfactory bulb. Acts as a ligand for IGF1R. Binds to the alpha subunit of IGF1R, leading to the activation of the intrinsic tyrosine kinase activity which autophosphorylates tyrosine residues in the beta subunit thus initiating a cascade of down-stream signaling events leading to activation of the PI3K-AKT/PKB and the Ras-MAPK pathways. Binds to integrins ITGAV:ITGB3 and ITGA6:ITGB4. Its binding to integrins and subsequent ternary complex formation with integrins and IGFR1 are essential for IGF1 signaling. Induces the phosphorylation and activation of IGFR1, MAPK3/ERK1, MAPK1/ERK2 and AKT1. As part of the MAPK/ERK signaling pathway, acts as a negative regulator of apoptosis in cardiomyocytes via promotion of STUB1/CHIP-mediated ubiquitination and degradation of ICER-type isoforms of CREM. This is Insulin-like growth factor 1 from Canis lupus familiaris (Dog).